Consider the following 813-residue polypeptide: ATP-dependent zinc metalloprotease FTSH 10, mitochondrial (813 aa).

The transit peptide at 1–86 (MIFSKLGSSL…FANPRLRRFF (86 aa)) directs the protein to the mitochondrion. The disordered stretch occupies residues 93–129 (KKNYENYYPKDSKKAPKNEQKSESRDGSKKNENENAG). Basic and acidic residues predominate over residues 94–125 (KNYENYYPKDSKKAPKNEQKSESRDGSKKNEN). The chain crosses the membrane as a helical span at residues 139–157 (MLIPLMAIALILSTFSLGS). Residue 367–374 (GPPGTGKT) coordinates ATP. A Zn(2+)-binding site is contributed by histidine 592. Glutamate 593 is a catalytic residue. Residues histidine 596 and aspartate 668 each coordinate Zn(2+). The segment covering 764-790 (RPFKSGETTNYDRFKSGFEESEKESQK) has biased composition (basic and acidic residues). The interval 764–813 (RPFKSGETTNYDRFKSGFEESEKESQKESVPVKPVEDDGIPPLEPQVVPT) is disordered.

This sequence in the N-terminal section; belongs to the AAA ATPase family. It in the C-terminal section; belongs to the peptidase M41 family. The cofactor is Zn(2+).

It is found in the mitochondrion inner membrane. Functionally, probable ATP-dependent zinc metallopeptidase. Involved in the assembly and/or stability of the complexes I and V of the mitochondrial oxidative phosphorylation system. The polypeptide is ATP-dependent zinc metalloprotease FTSH 10, mitochondrial (FTSH10) (Arabidopsis thaliana (Mouse-ear cress)).